The following is a 742-amino-acid chain: Zinc finger MYND domain-containing protein 15 (742 aa).

A disordered region spans residues 109–199; sequence LEDGEEGEEE…QKRKGQRSEA (91 aa). Acidic residues predominate over residues 110-127; the sequence is EDGEEGEEEEEEDEEEEK. A compositionally biased stretch (polar residues) spans 151-161; the sequence is SRESPQETNPP. Residues 166–189 show a composition bias toward basic and acidic residues; the sequence is EAAREAGGGKDGCREDRVENETRP. Zn(2+)-binding residues include Cys313, Cys316, Cys328, Cys331, Cys337, Cys341, His355, and Cys359. The MYND-type zinc finger occupies 313 to 359; sequence CHVCHRHSFEAKLTPCPQCSAVLYCGEACLRADWQRCPDDVSHRFWC. Disordered regions lie at residues 565 to 590 and 701 to 742; these read EVSV…GRRD and QGSG…RRRK. Residues 708 to 724 are compositionally biased toward pro residues; it reads APGPPPPSPTPSAPPAP. Residues 725-742 show a composition bias toward basic residues; sequence TRRRRGEKKPGRGARRRK.

As to quaternary structure, interacts with HDAC1, HDAC3, HDAC6 and, to a lesser extent, with HDAC7.

The protein localises to the nucleus. The protein resides in the cytoplasm. Acts as a transcriptional repressor through interaction with histone deacetylases (HDACs). May be important for spermiogenesis. This is Zinc finger MYND domain-containing protein 15 (ZMYND15) from Homo sapiens (Human).